The chain runs to 560 residues: DNA ligase B (560 aa).

Lys-128 acts as the N6-AMP-lysine intermediate in catalysis.

Belongs to the NAD-dependent DNA ligase family. LigB subfamily.

The enzyme catalyses NAD(+) + (deoxyribonucleotide)n-3'-hydroxyl + 5'-phospho-(deoxyribonucleotide)m = (deoxyribonucleotide)n+m + AMP + beta-nicotinamide D-nucleotide.. Catalyzes the formation of phosphodiester linkages between 5'-phosphoryl and 3'-hydroxyl groups in double-stranded DNA using NAD as a coenzyme and as the energy source for the reaction. The chain is DNA ligase B from Azotobacter vinelandii (strain DJ / ATCC BAA-1303).